The chain runs to 168 residues: HTH-type transcriptional regulator IscR (168 aa).

An HTH rrf2-type domain is found at 2–131 (KLTSKGRYAV…NNITLGELMS (130 aa)). Positions 28–51 (LADISERQGISLSYLEQLFSKLRK) form a DNA-binding region, H-T-H motif. The [2Fe-2S] cluster site is built by cysteine 92, cysteine 98, and cysteine 104.

Requires [2Fe-2S] cluster as cofactor.

Regulates the transcription of several operons and genes involved in the biogenesis of Fe-S clusters and Fe-S-containing proteins. The chain is HTH-type transcriptional regulator IscR from Vibrio vulnificus (strain CMCP6).